A 511-amino-acid polypeptide reads, in one-letter code: Cytochrome P450 77A2 (511 aa).

Cys456 provides a ligand contact to heme.

Belongs to the cytochrome P450 family. Heme is required as a cofactor.

The polypeptide is Cytochrome P450 77A2 (CYP77A2) (Solanum melongena (Eggplant)).